A 379-amino-acid chain; its full sequence is Ascochitine biosynthesis cluster protein 8 (379 aa).

The next 3 membrane-spanning stretches (helical) occupy residues 87–107 (ELIASVLALVARFGALVLDLE), 116–136 (VGPVSILGFCTGLLAGAVAAC), and 141–161 (IKVFDLACEVLAISFRLVVAL).

The protein resides in the membrane. It functions in the pathway mycotoxin biosynthesis. In terms of biological role, part of the gene cluster that mediates the biosynthesis of the selective antifungal agent ascochitine, an o-quinone methide that plays a possible protective role against other microbial competitors in nature and is considered to be important for pathogenicity of legume-associated Didymella species. The pathway probably begins with the synthesis of a keto-aldehyde intermediate by the ascochitine non-reducing polyketide synthase pksAC from successive condensations of 4 malonyl-CoA units, presumably with a simple acetyl-CoA starter unit. Release of the keto-aldehyde intermediate is consistent with the presence of the C-terminal reductive release domain. The HR-PKS (orf7) probably makes a diketide starter unit which is passed to the non-reducing polyketide synthase pksAC for further extension, producing ascochital and ascochitine. The aldehyde dehydrogenase (orf1), the 2-oxoglutarate-dependent dioxygenase (orf3) and the dehydrogenase (orf9) are probably involved in subsequent oxidations of methyl groups to the carboxylic acid of the heterocyclic ring. The ascochitine gene cluster also includes a gene encoding a short peptide with a cupin domain (orf2) that is often found in secondary metabolite gene clusters and which function has still to be determined. The sequence is that of Ascochitine biosynthesis cluster protein 8 from Didymella fabae (Leaf and pod spot disease fungus).